The sequence spans 593 residues: Lipolysis-stimulated lipoprotein receptor (593 aa).

Residues 1 to 35 (MAPAAGACAGAPDSHPATVVFVCLFLIIFCPDPAS) form the signal peptide. Topologically, residues 36–206 (AIQVTVSDPY…PGFRAGPLED (171 aa)) are extracellular. One can recognise an Ig-like V-type domain in the interval 89–181 (PASVDNQLNA…DLDGNNEAYA (93 aa)). A disulfide bridge connects residues Cys113 and Cys165. A helical membrane pass occupies residues 207–227 (WLFVVVVCLASLLLFLLLGIC). At 228-593 (WCQCCPHTCC…LALSRESLVV (366 aa)) the chain is on the cytoplasmic side. A Phosphothreonine modification is found at Thr283. Residues Ser308, Ser314, Ser332, Ser375, and Ser379 each carry the phosphoserine modification. Residues 375 to 387 (SEVTSLHEDDWRS) are compositionally biased toward basic and acidic residues. Residues 375–578 (SEVTSLHEDD…ETDSQASRER (204 aa)) form a disordered region. Thr396 carries the post-translational modification Phosphothreonine. A phosphoserine mark is found at Ser407, Ser410, and Ser436. Over residues 435 to 444 (RSVDALDDIN) the composition is skewed to basic and acidic residues. Low complexity predominate over residues 445–460 (RPGSTESGRSSPPSSG). Phosphoserine is present on residues Ser471 and Ser473. Residues 472-550 (RSRDDLYDPD…GSGERRRVYR (79 aa)) are compositionally biased toward basic and acidic residues. Tyr478 carries the phosphotyrosine modification. Ser575 is modified (phosphoserine). Lys582 participates in a covalent cross-link: Glycyl lysine isopeptide (Lys-Gly) (interchain with G-Cter in ubiquitin). Phosphoserine occurs at positions 587 and 590.

This sequence belongs to the immunoglobulin superfamily. LISCH7 family. As to quaternary structure, homotrimer or homotetramer constituted of isoform 1 and/or isoform 2 and isoform 3. Assembles into cell-cell contacts. Interacts (via the cytoplasmic domain) with MARVELD2 (via C-terminal cytoplasmic domain); the interaction is required to recruit MARVELD2 to tricellular contacts. Interacts with OCLN. Post-translationally, phosphorylation at Ser-308 by MAPK8/JNK1 and MAPK9/JNK2 may be required for exclusive localization at tricellular tight junstions. In terms of processing, polyubiquitinated at Lys-582 via 'Lys-63'-linked ubiquitin chains; deubiquitinated by USP53. As to expression, specifically expressed in liver. Also detected in kidney and lung.

The protein localises to the cell membrane. Its subcellular location is the cell junction. It is found in the tight junction. Its function is as follows. Probable role in the clearance of triglyceride-rich lipoprotein from blood. Binds chylomicrons, LDL and VLDL in presence of free fatty acids and allows their subsequent uptake in the cells. Maintains epithelial barrier function by recruiting MARVELD2/tricellulin to tricellular tight junctions. The protein is Lipolysis-stimulated lipoprotein receptor of Rattus norvegicus (Rat).